The chain runs to 246 residues: Nodulin-25 (246 aa).

Residues 1-24 form the signal peptide; sequence MVYSNTYMLLGLGVFVLLSSHVLA.

The protein resides in the symbiosome. It localises to the peribacteroid space. Its function is as follows. Involved in the development and function of nodules. It might participate in the biological process of symbiotic nitrogen fixation. The chain is Nodulin-25 (NMS-25) from Medicago sativa (Alfalfa).